The chain runs to 201 residues: MQPFTTHTGLAVMIDSTNIDTDQIIPKQFLSKVTRDGFGVHLFHDWRYLDDAGDQPNPEFSLNQSRYKGASILLAQENFGCGSSREHAPWALVDFGLRAIIAPSFADIFYGNSINNGLLPVALTHAQVRQLMDEVAAEAGAQITVDLTSCKVISPSGAEFSFTLAESARHKLLNGLDAIGLTLSHAAQISQYETQIQGWRR.

Belongs to the LeuD family. LeuD type 1 subfamily. In terms of assembly, heterodimer of LeuC and LeuD.

The catalysed reaction is (2R,3S)-3-isopropylmalate = (2S)-2-isopropylmalate. Its pathway is amino-acid biosynthesis; L-leucine biosynthesis; L-leucine from 3-methyl-2-oxobutanoate: step 2/4. Its function is as follows. Catalyzes the isomerization between 2-isopropylmalate and 3-isopropylmalate, via the formation of 2-isopropylmaleate. The polypeptide is 3-isopropylmalate dehydratase small subunit (Shewanella baltica (strain OS223)).